Reading from the N-terminus, the 504-residue chain is ATP-dependent rRNA helicase RRP3 (504 aa).

The segment covering 34-62 (ASASSAASTKESLPVSETISISTSETPVS) has biased composition (low complexity). Positions 34–99 (ASASSAASTK…SSSSPPSVQS (66 aa)) are disordered. Positions 68–79 (SNKEDLSTKKDQ) are enriched in basic and acidic residues. The segment covering 80-99 (SSASSSSSTSSSSSPPSVQS) has biased composition (low complexity). The Q motif motif lies at 98 to 126 (QSFTEFDLVPELLESIQSLKYTQPTPIQA). Positions 129 to 301 (IPHALQGKDI…RSLNSPVQVE (173 aa)) constitute a Helicase ATP-binding domain. 142 to 149 (AETGSGKT) contributes to the ATP binding site. Positions 248-251 (DEVD) match the DEAD box motif. The Helicase C-terminal domain maps to 327-471 (RLIQIVNLDS…DLPLDEMQGL (145 aa)).

It belongs to the DEAD box helicase family. DDX47/RRP3 subfamily. Interacts with the SSU processome.

It is found in the nucleus. The catalysed reaction is ATP + H2O = ADP + phosphate + H(+). In terms of biological role, ATP-dependent rRNA helicase required for pre-ribosomal RNA processing. Involved in the maturation of the 35S-pre-rRNA and to its cleavage to mature 18S rRNA. This is ATP-dependent rRNA helicase RRP3 from Lodderomyces elongisporus (strain ATCC 11503 / CBS 2605 / JCM 1781 / NBRC 1676 / NRRL YB-4239) (Yeast).